We begin with the raw amino-acid sequence, 257 residues long: Hydroxyacylglutathione hydrolase (257 aa).

Positions 54, 56, 58, 59, 113, 137, and 175 each coordinate Zn(2+).

Belongs to the metallo-beta-lactamase superfamily. Glyoxalase II family. Monomer. Zn(2+) serves as cofactor.

It carries out the reaction an S-(2-hydroxyacyl)glutathione + H2O = a 2-hydroxy carboxylate + glutathione + H(+). Its pathway is secondary metabolite metabolism; methylglyoxal degradation; (R)-lactate from methylglyoxal: step 2/2. Functionally, thiolesterase that catalyzes the hydrolysis of S-D-lactoyl-glutathione to form glutathione and D-lactic acid. This is Hydroxyacylglutathione hydrolase from Rippkaea orientalis (strain PCC 8801 / RF-1) (Cyanothece sp. (strain PCC 8801)).